We begin with the raw amino-acid sequence, 277 residues long: UPF0276 protein PP_0992 (277 aa).

Belongs to the UPF0276 family.

The polypeptide is UPF0276 protein PP_0992 (Pseudomonas putida (strain ATCC 47054 / DSM 6125 / CFBP 8728 / NCIMB 11950 / KT2440)).